Consider the following 634-residue polypeptide: Probable potassium transport system protein Kup (634 aa).

Transmembrane regions (helical) follow at residues 21-41 (LVIG…LYTL), 58-78 (VLGI…LKYV), 110-130 (MYVV…DGVI), 152-172 (PFVV…QRFG), 179-199 (AFGP…VYNM), 223-243 (WHAV…EALY), 258-278 (WQFV…ALML), 296-316 (ALYP…QALI), 348-368 (IYVP…VIGF), 377-397 (AYGV…IIYA), 403-423 (VPAP…CAFF), and 427-447 (IIKF…LFTL).

The protein belongs to the HAK/KUP transporter (TC 2.A.72) family.

It localises to the cell inner membrane. The catalysed reaction is K(+)(in) + H(+)(in) = K(+)(out) + H(+)(out). Functionally, transport of potassium into the cell. Likely operates as a K(+):H(+) symporter. The chain is Probable potassium transport system protein Kup from Xanthomonas euvesicatoria pv. vesicatoria (strain 85-10) (Xanthomonas campestris pv. vesicatoria).